The chain runs to 392 residues: 1-deoxy-D-xylulose 5-phosphate reductoisomerase (392 aa).

Residues T10, G11, S12, I13, R37, Q38, and N124 each coordinate NADPH. K125 contributes to the 1-deoxy-D-xylulose 5-phosphate binding site. E126 lines the NADPH pocket. A Mn(2+)-binding site is contributed by D150. 4 residues coordinate 1-deoxy-D-xylulose 5-phosphate: S151, E152, S179, and H202. E152 is a binding site for Mn(2+). Residue G208 participates in NADPH binding. The 1-deoxy-D-xylulose 5-phosphate site is built by S215, N220, K221, and E224. Residue E224 participates in Mn(2+) binding.

This sequence belongs to the DXR family. The cofactor is Mg(2+). Mn(2+) serves as cofactor.

The enzyme catalyses 2-C-methyl-D-erythritol 4-phosphate + NADP(+) = 1-deoxy-D-xylulose 5-phosphate + NADPH + H(+). The protein operates within isoprenoid biosynthesis; isopentenyl diphosphate biosynthesis via DXP pathway; isopentenyl diphosphate from 1-deoxy-D-xylulose 5-phosphate: step 1/6. Functionally, catalyzes the NADPH-dependent rearrangement and reduction of 1-deoxy-D-xylulose-5-phosphate (DXP) to 2-C-methyl-D-erythritol 4-phosphate (MEP). The chain is 1-deoxy-D-xylulose 5-phosphate reductoisomerase from Cupriavidus metallidurans (strain ATCC 43123 / DSM 2839 / NBRC 102507 / CH34) (Ralstonia metallidurans).